Reading from the N-terminus, the 216-residue chain is Orotate phosphoribosyltransferase (216 aa).

Lys-30 contacts 5-phospho-alpha-D-ribose 1-diphosphate. Residue 38–39 coordinates orotate; the sequence is FF. Residues 75-76, Arg-102, Lys-103, Lys-106, His-108, and 128-136 contribute to the 5-phospho-alpha-D-ribose 1-diphosphate site; these read YK and DDVITAGTA. 2 residues coordinate orotate: Thr-132 and Arg-160.

The protein belongs to the purine/pyrimidine phosphoribosyltransferase family. PyrE subfamily. Homodimer. It depends on Mg(2+) as a cofactor.

It carries out the reaction orotidine 5'-phosphate + diphosphate = orotate + 5-phospho-alpha-D-ribose 1-diphosphate. It functions in the pathway pyrimidine metabolism; UMP biosynthesis via de novo pathway; UMP from orotate: step 1/2. In terms of biological role, catalyzes the transfer of a ribosyl phosphate group from 5-phosphoribose 1-diphosphate to orotate, leading to the formation of orotidine monophosphate (OMP). This Acinetobacter baylyi (strain ATCC 33305 / BD413 / ADP1) protein is Orotate phosphoribosyltransferase.